We begin with the raw amino-acid sequence, 102 residues long: Large ribosomal subunit protein bL21 (102 aa).

The protein belongs to the bacterial ribosomal protein bL21 family. As to quaternary structure, part of the 50S ribosomal subunit. Contacts protein L20.

Its function is as follows. This protein binds to 23S rRNA in the presence of protein L20. In Bacillus velezensis (strain DSM 23117 / BGSC 10A6 / LMG 26770 / FZB42) (Bacillus amyloliquefaciens subsp. plantarum), this protein is Large ribosomal subunit protein bL21.